The chain runs to 443 residues: Xaa-Pro dipeptidase (443 aa).

Positions 246, 257, 339, 384, and 423 each coordinate Mn(2+).

Belongs to the peptidase M24B family. Bacterial-type prolidase subfamily. Requires Mn(2+) as cofactor.

The catalysed reaction is Xaa-L-Pro dipeptide + H2O = an L-alpha-amino acid + L-proline. Functionally, splits dipeptides with a prolyl residue in the C-terminal position. In Shigella flexneri, this protein is Xaa-Pro dipeptidase.